Consider the following 442-residue polypeptide: Chromosomal replication initiator protein DnaA (442 aa).

Positions 1 to 69 are domain I, interacts with DnaA modulators; it reads METLWDGILS…AQAGEQVIGR (69 aa). The domain II stretch occupies residues 69–103; that stretch reads RPIQVDFIVSEQSEEALKPVIEREPAPAAPPANVA. The interval 104–320 is domain III, AAA+ region; the sequence is SLNSKYTFSR…GALIRAVAYV (217 aa). Residues G148, G150, K151, and T152 each contribute to the ATP site. Positions 321 to 442 are domain IV, binds dsDNA; that stretch reads SISGLPMTVE…GNRLEADARH (122 aa).

This sequence belongs to the DnaA family. Oligomerizes as a right-handed, spiral filament on DNA at oriC.

The protein localises to the cytoplasm. In terms of biological role, plays an essential role in the initiation and regulation of chromosomal replication. ATP-DnaA binds to the origin of replication (oriC) to initiate formation of the DNA replication initiation complex once per cell cycle. Binds the DnaA box (a 9 base pair repeat at the origin) and separates the double-stranded (ds)DNA. Forms a right-handed helical filament on oriC DNA; dsDNA binds to the exterior of the filament while single-stranded (ss)DNA is stabiized in the filament's interior. The ATP-DnaA-oriC complex binds and stabilizes one strand of the AT-rich DNA unwinding element (DUE), permitting loading of DNA polymerase. After initiation quickly degrades to an ADP-DnaA complex that is not apt for DNA replication. Binds acidic phospholipids. The protein is Chromosomal replication initiator protein DnaA of Gloeobacter violaceus (strain ATCC 29082 / PCC 7421).